A 154-amino-acid polypeptide reads, in one-letter code: Probable biofilm-surface layer protein B (154 aa).

The signal sequence occupies residues 1-30; that stretch reads MLKRTSFVSSLFISSAVLLSILLPSGQAHA.

It belongs to the BslA/BslB family. Monomer in vitro.

The protein resides in the secreted. Has a minor role in biofilm architecture. May contribute to the surface hydrophobicity. This Bacillus subtilis (strain 168) protein is Probable biofilm-surface layer protein B.